The following is a 417-amino-acid chain: Serine hydroxymethyltransferase (417 aa).

(6S)-5,6,7,8-tetrahydrofolate-binding positions include Leu-121 and 125–127 (GHL). Lys-229 is subject to N6-(pyridoxal phosphate)lysine. 355–357 (SPF) is a binding site for (6S)-5,6,7,8-tetrahydrofolate.

Belongs to the SHMT family. As to quaternary structure, homodimer. It depends on pyridoxal 5'-phosphate as a cofactor.

The protein localises to the cytoplasm. The catalysed reaction is (6R)-5,10-methylene-5,6,7,8-tetrahydrofolate + glycine + H2O = (6S)-5,6,7,8-tetrahydrofolate + L-serine. It participates in one-carbon metabolism; tetrahydrofolate interconversion. It functions in the pathway amino-acid biosynthesis; glycine biosynthesis; glycine from L-serine: step 1/1. Its function is as follows. Catalyzes the reversible interconversion of serine and glycine with tetrahydrofolate (THF) serving as the one-carbon carrier. This reaction serves as the major source of one-carbon groups required for the biosynthesis of purines, thymidylate, methionine, and other important biomolecules. Also exhibits THF-independent aldolase activity toward beta-hydroxyamino acids, producing glycine and aldehydes, via a retro-aldol mechanism. The polypeptide is Serine hydroxymethyltransferase (Stenotrophomonas maltophilia (strain R551-3)).